We begin with the raw amino-acid sequence, 101 residues long: NAD(P)H-quinone oxidoreductase subunit 4L, chloroplastic (101 aa).

3 helical membrane passes run 2-22, 32-52, and 61-81; these read ILEH…YGLI, MCLE…SDFF, and IFCI…LAIV.

It belongs to the complex I subunit 4L family. NDH is composed of at least 16 different subunits, 5 of which are encoded in the nucleus.

It localises to the plastid. The protein localises to the chloroplast thylakoid membrane. The enzyme catalyses a plastoquinone + NADH + (n+1) H(+)(in) = a plastoquinol + NAD(+) + n H(+)(out). The catalysed reaction is a plastoquinone + NADPH + (n+1) H(+)(in) = a plastoquinol + NADP(+) + n H(+)(out). NDH shuttles electrons from NAD(P)H:plastoquinone, via FMN and iron-sulfur (Fe-S) centers, to quinones in the photosynthetic chain and possibly in a chloroplast respiratory chain. The immediate electron acceptor for the enzyme in this species is believed to be plastoquinone. Couples the redox reaction to proton translocation, and thus conserves the redox energy in a proton gradient. This Olimarabidopsis pumila (Dwarf rocket) protein is NAD(P)H-quinone oxidoreductase subunit 4L, chloroplastic.